A 331-amino-acid polypeptide reads, in one-letter code: Ketol-acid reductoisomerase (NADP(+)) (331 aa).

The region spanning 2 to 182 (ARMYYDEDAN…GGTRGGVLET (181 aa)) is the KARI N-terminal Rossmann domain. NADP(+)-binding positions include 25-28 (YGSQ), Ser-51, Ser-53, and 83-86 (DEVQ). The active site involves His-108. NADP(+) is bound at residue Gly-134. The KARI C-terminal knotted domain maps to 183 to 328 (TFREETETDL…KDLRAMFSWL (146 aa)). Residues Asp-191, Glu-195, Glu-227, and Glu-231 each contribute to the Mg(2+) site. Ser-252 serves as a coordination point for substrate.

The protein belongs to the ketol-acid reductoisomerase family. It depends on Mg(2+) as a cofactor.

It catalyses the reaction (2R)-2,3-dihydroxy-3-methylbutanoate + NADP(+) = (2S)-2-acetolactate + NADPH + H(+). It carries out the reaction (2R,3R)-2,3-dihydroxy-3-methylpentanoate + NADP(+) = (S)-2-ethyl-2-hydroxy-3-oxobutanoate + NADPH + H(+). Its pathway is amino-acid biosynthesis; L-isoleucine biosynthesis; L-isoleucine from 2-oxobutanoate: step 2/4. It functions in the pathway amino-acid biosynthesis; L-valine biosynthesis; L-valine from pyruvate: step 2/4. Its function is as follows. Involved in the biosynthesis of branched-chain amino acids (BCAA). Catalyzes an alkyl-migration followed by a ketol-acid reduction of (S)-2-acetolactate (S2AL) to yield (R)-2,3-dihydroxy-isovalerate. In the isomerase reaction, S2AL is rearranged via a Mg-dependent methyl migration to produce 3-hydroxy-3-methyl-2-ketobutyrate (HMKB). In the reductase reaction, this 2-ketoacid undergoes a metal-dependent reduction by NADPH to yield (R)-2,3-dihydroxy-isovalerate. The sequence is that of Ketol-acid reductoisomerase (NADP(+)) from Nostoc sp. (strain PCC 7120 / SAG 25.82 / UTEX 2576).